The primary structure comprises 114 residues: T cell receptor beta variable 4-3 (114 aa).

A signal peptide spans 1–21 (MGCRLLCCAVLCLLGAVPMET). Positions 22 to 114 (GVTQTPRHLV…SALYLCASSQ (93 aa)) constitute an Ig-like domain. A disulfide bridge links Cys42 with Cys110. N-linked (GlcNAc...) asparagine glycosylation is found at Asn76 and Asn89.

As to quaternary structure, alpha-beta TR is a heterodimer composed of an alpha and beta chain; disulfide-linked. The alpha-beta TR is associated with the transmembrane signaling CD3 coreceptor proteins to form the TR-CD3 (TcR or TCR). The assembly of alpha-beta TR heterodimers with CD3 occurs in the endoplasmic reticulum where a single alpha-beta TR heterodimer associates with one CD3D-CD3E heterodimer, one CD3G-CD3E heterodimer and one CD247 homodimer forming a stable octameric structure. CD3D-CD3E and CD3G-CD3E heterodimers preferentially associate with TR alpha and TR beta chains, respectively. The association of the CD247 homodimer is the last step of TcR assembly in the endoplasmic reticulum and is required for transport to the cell surface.

The protein resides in the cell membrane. In terms of biological role, v region of the variable domain of T cell receptor (TR) beta chain that participates in the antigen recognition. Alpha-beta T cell receptors are antigen specific receptors which are essential to the immune response and are present on the cell surface of T lymphocytes. Recognize peptide-major histocompatibility (MH) (pMH) complexes that are displayed by antigen presenting cells (APC), a prerequisite for efficient T cell adaptive immunity against pathogens. Binding of alpha-beta TR to pMH complex initiates TR-CD3 clustering on the cell surface and intracellular activation of LCK that phosphorylates the ITAM motifs of CD3G, CD3D, CD3E and CD247 enabling the recruitment of ZAP70. In turn ZAP70 phosphorylates LAT, which recruits numerous signaling molecules to form the LAT signalosome. The LAT signalosome propagates signal branching to three major signaling pathways, the calcium, the mitogen-activated protein kinase (MAPK) kinase and the nuclear factor NF-kappa-B (NF-kB) pathways, leading to the mobilization of transcription factors that are critical for gene expression and essential for T cell growth and differentiation. The T cell repertoire is generated in the thymus, by V-(D)-J rearrangement. This repertoire is then shaped by intrathymic selection events to generate a peripheral T cell pool of self-MH restricted, non-autoaggressive T cells. Post-thymic interaction of alpha-beta TR with the pMH complexes shapes TR structural and functional avidity. In Homo sapiens (Human), this protein is T cell receptor beta variable 4-3.